Reading from the N-terminus, the 222-residue chain is MTVPVITIDGPSASGKGTVAAQVAARLAFHYLDSGSLYRLLALHARRRGIAWDDEPALARAAAALPVEFSDGAVWLEGNDASQDIRAEEIGIGASKVGALPAVRAALLQRQRDFCEAPGLVTDGRDMGSVVFPDATLKIFLTASAEERASRRHKQLIGKGESANLAQIMQDIIDRDARDAARPVAPLRQEPDAFLLDTTELTIDQAVDKVLEWFEEKQASGH.

10-18 (GPSASGKGT) contributes to the ATP binding site.

It belongs to the cytidylate kinase family. Type 1 subfamily.

Its subcellular location is the cytoplasm. It carries out the reaction CMP + ATP = CDP + ADP. The catalysed reaction is dCMP + ATP = dCDP + ADP. This Chromobacterium violaceum (strain ATCC 12472 / DSM 30191 / JCM 1249 / CCUG 213 / NBRC 12614 / NCIMB 9131 / NCTC 9757 / MK) protein is Cytidylate kinase.